A 317-amino-acid polypeptide reads, in one-letter code: Protein translocase subunit SecF (317 aa).

A run of 6 helical transmembrane segments spans residues 11-31 (FYLL…LFGL), 135-155 (RSIV…AFAF), 166-186 (ICAI…FAIL), 197-217 (LFVT…IVVF), 244-266 (LVRS…FFGG), and 276-298 (LLIG…LVSW).

It belongs to the SecD/SecF family. SecF subfamily. As to quaternary structure, forms a complex with SecD. Part of the essential Sec protein translocation apparatus which comprises SecA, SecYEG and auxiliary proteins SecDF. Other proteins may also be involved.

The protein resides in the cell membrane. Its function is as follows. Part of the Sec protein translocase complex. Interacts with the SecYEG preprotein conducting channel. SecDF uses the proton motive force (PMF) to complete protein translocation after the ATP-dependent function of SecA. This is Protein translocase subunit SecF from Thermobaculum terrenum (strain ATCC BAA-798 / CCMEE 7001 / YNP1).